A 307-amino-acid polypeptide reads, in one-letter code: tRNA pseudouridine synthase B (307 aa).

Asp38 (nucleophile) is an active-site residue.

Belongs to the pseudouridine synthase TruB family. Type 1 subfamily.

The catalysed reaction is uridine(55) in tRNA = pseudouridine(55) in tRNA. Functionally, responsible for synthesis of pseudouridine from uracil-55 in the psi GC loop of transfer RNAs. The chain is tRNA pseudouridine synthase B from Bacillus cereus (strain ATCC 14579 / DSM 31 / CCUG 7414 / JCM 2152 / NBRC 15305 / NCIMB 9373 / NCTC 2599 / NRRL B-3711).